Here is a 645-residue protein sequence, read N- to C-terminus: DNA ligase (645 aa).

NAD(+)-binding positions include 30–34 (DIEYD), 79–80 (SM), and Glu106. Lys108 serves as the catalytic N6-AMP-lysine intermediate. NAD(+) contacts are provided by Arg129, Glu163, and Lys302. Cys396, Cys399, Cys412, and Cys417 together coordinate Zn(2+). The BRCT domain occupies 570-645 (ISQNVFTKKT…ISEDEFKEML (76 aa)).

This sequence belongs to the NAD-dependent DNA ligase family. LigA subfamily. Mg(2+) serves as cofactor. It depends on Mn(2+) as a cofactor.

The catalysed reaction is NAD(+) + (deoxyribonucleotide)n-3'-hydroxyl + 5'-phospho-(deoxyribonucleotide)m = (deoxyribonucleotide)n+m + AMP + beta-nicotinamide D-nucleotide.. Functionally, DNA ligase that catalyzes the formation of phosphodiester linkages between 5'-phosphoryl and 3'-hydroxyl groups in double-stranded DNA using NAD as a coenzyme and as the energy source for the reaction. It is essential for DNA replication and repair of damaged DNA. This is DNA ligase from Campylobacter hominis (strain ATCC BAA-381 / DSM 21671 / CCUG 45161 / LMG 19568 / NCTC 13146 / CH001A).